The sequence spans 119 residues: uncharacterized protein (119 aa).

Transmembrane regions (helical) follow at residues 57–77 (FSHHLSILQSMCLHFIISILF) and 80–100 (YIFVFLFAFLLPSAFPLFILH).

Its subcellular location is the membrane. This is an uncharacterized protein from Saccharomyces cerevisiae (strain ATCC 204508 / S288c) (Baker's yeast).